A 506-amino-acid chain; its full sequence is Thyroid hormone receptor alpha (506 aa).

The tract at residues 1-32 (MEQKPSKVECGSDPEENSARSPDGKRKRKNGQ) is disordered. The segment at 1–52 (MEQKPSKVECGSDPEENSARSPDGKRKRKNGQCSLKTSMSGYIPSYLDKDEQ) is modulating. The Zn(2+) site is built by Cys53, Cys56, Cys70, Cys73, Cys91, Cys97, Cys107, and Cys110. NR C4-type zinc fingers lie at residues 53 to 73 (CVVC…CEGC) and 91 to 115 (CKYD…FKKC). Residues 53 to 127 (CVVCGDKATG…VGMAMDLVLD (75 aa)) constitute a DNA-binding region (nuclear receptor). The NR LBD domain maps to 163–407 (EEWDLIHVAT…EGQQLLGMHV (245 aa)). Arg228 and Ser277 together coordinate 3,3',5-triiodo-L-thyronine. Residues 460 to 506 (GEDDSSEAGSLTSSDEDPEVCEDAAQATQPLPEAPPRADGEGGGGGS) form a disordered region.

Belongs to the nuclear hormone receptor family. NR1 subfamily. Binds DNA as a dimer; homodimer and heterodimer with RXRB. Interacts with NCOA3 and NCOA6 coactivators, leading to a strong increase of transcription of target genes. Probably interacts with SFPQ. Interacts with C1D. Interacts with AKAP13. Interacts with TP53INP2. Interacts with PER2. Interacts with PER2. Isoform alpha-2 and isoform alpha-1 interact with TACC1, but the interaction with alpha-1 is weaker. The interaction with isoform alpha-1, but not alpha-2, is decreased in the presence of thyroid hormone T3.

The protein localises to the nucleus. It localises to the cytoplasm. Nuclear hormone receptor that can act as a repressor or activator of transcription. High affinity receptor for thyroid hormones, including triiodothyronine and thyroxine. In Sus scrofa (Pig), this protein is Thyroid hormone receptor alpha (THRA).